The chain runs to 182 residues: Small heat shock protein hspG1 (182 aa).

One can recognise a sHSP domain in the interval isoleucine 43–asparagine 182.

Belongs to the small heat shock protein (HSP20) family.

The protein is Small heat shock protein hspG1 (hspG1) of Dictyostelium discoideum (Social amoeba).